The chain runs to 368 residues: Probable replication factor C subunit 5 (368 aa).

An ATP-binding site is contributed by 69-76; it reads GPPGTGKT.

The protein belongs to the activator 1 small subunits family. As to quaternary structure, heteropentamer of various rfc subunits that forms a complex (RFC) with PCNA in the presence of ATP.

It localises to the nucleus. The elongation of primed DNA templates by DNA polymerase delta and epsilon requires the action of the accessory proteins proliferating cell nuclear antigen (PCNA) and activator 1. The polypeptide is Probable replication factor C subunit 5 (Caenorhabditis elegans).